The primary structure comprises 163 residues: SsrA-binding protein (163 aa).

It belongs to the SmpB family.

The protein resides in the cytoplasm. In terms of biological role, required for rescue of stalled ribosomes mediated by trans-translation. Binds to transfer-messenger RNA (tmRNA), required for stable association of tmRNA with ribosomes. tmRNA and SmpB together mimic tRNA shape, replacing the anticodon stem-loop with SmpB. tmRNA is encoded by the ssrA gene; the 2 termini fold to resemble tRNA(Ala) and it encodes a 'tag peptide', a short internal open reading frame. During trans-translation Ala-aminoacylated tmRNA acts like a tRNA, entering the A-site of stalled ribosomes, displacing the stalled mRNA. The ribosome then switches to translate the ORF on the tmRNA; the nascent peptide is terminated with the 'tag peptide' encoded by the tmRNA and targeted for degradation. The ribosome is freed to recommence translation, which seems to be the essential function of trans-translation. The sequence is that of SsrA-binding protein from Shewanella sp. (strain ANA-3).